A 160-amino-acid polypeptide reads, in one-letter code: UPF0479 membrane protein YLL066W-A (160 aa).

Helical transmembrane passes span 39 to 59 (IVFC…KVLQ) and 136 to 156 (VPMI…ISQH).

This sequence belongs to the UPF0479 family.

It localises to the membrane. The sequence is that of UPF0479 membrane protein YLL066W-A from Saccharomyces cerevisiae (strain ATCC 204508 / S288c) (Baker's yeast).